The chain runs to 203 residues: Molybdenum cofactor guanylyltransferase (203 aa).

GTP contacts are provided by residues 12–14, Lys25, Asn53, Asp71, and Asp101; that span reads LAG. Asp101 serves as a coordination point for Mg(2+).

It belongs to the MobA family. In terms of assembly, monomer. The cofactor is Mg(2+).

The protein localises to the cytoplasm. The catalysed reaction is Mo-molybdopterin + GTP + H(+) = Mo-molybdopterin guanine dinucleotide + diphosphate. In terms of biological role, transfers a GMP moiety from GTP to Mo-molybdopterin (Mo-MPT) cofactor (Moco or molybdenum cofactor) to form Mo-molybdopterin guanine dinucleotide (Mo-MGD) cofactor. The chain is Molybdenum cofactor guanylyltransferase from Methylibium petroleiphilum (strain ATCC BAA-1232 / LMG 22953 / PM1).